The primary structure comprises 258 residues: Phosphate import ATP-binding protein PstB (258 aa).

One can recognise an ABC transporter domain in the interval 5–247 (IDVSGLTAYY…SQIFSNPKEK (243 aa)). 37-44 (GPSGCGKS) contacts ATP.

Belongs to the ABC transporter superfamily. Phosphate importer (TC 3.A.1.7) family. In terms of assembly, the complex is composed of two ATP-binding proteins (PstB), two transmembrane proteins (PstC and PstA) and a solute-binding protein (PstS).

Its subcellular location is the cell membrane. The catalysed reaction is phosphate(out) + ATP + H2O = ADP + 2 phosphate(in) + H(+). In terms of biological role, part of the ABC transporter complex PstSACB involved in phosphate import. Responsible for energy coupling to the transport system. This Frankia casuarinae (strain DSM 45818 / CECT 9043 / HFP020203 / CcI3) protein is Phosphate import ATP-binding protein PstB.